Here is a 130-residue protein sequence, read N- to C-terminus: Bet1-like SNARE 1-2 (130 aa).

The Cytoplasmic portion of the chain corresponds to 1–106 (MNFRRENRAS…EKKSNRKSCK (106 aa)). One can recognise a t-SNARE coiled-coil homology domain in the interval 33 to 95 (AHDERDNDEA…SGTINRFKLV (63 aa)). Positions 40–82 (DEALENLQDRVSFLKRVTGDIHEEVENHNRLLDKVGNKMDSAR) form a coiled coil. Residues 107 to 122 (LIAYFVLLFLIMYYLI) form a helical; Anchor for type IV membrane protein membrane-spanning segment. Topologically, residues 123-130 (RLLNYIKG) are vesicular.

This sequence belongs to the BET1 family.

It is found in the golgi apparatus membrane. It localises to the endoplasmic reticulum membrane. Required for vesicular transport from the ER to the Golgi complex. Functions as a SNARE associated with ER-derived vesicles. The protein is Bet1-like SNARE 1-2 (BET12) of Arabidopsis thaliana (Mouse-ear cress).